We begin with the raw amino-acid sequence, 441 residues long: Homogentisate 1,2-dioxygenase (441 aa).

The active-site Proton acceptor is the His287. Fe cation-binding residues include His330 and Glu336. Residues Tyr345 and His366 each coordinate homogentisate. His366 provides a ligand contact to Fe cation.

Belongs to the homogentisate dioxygenase family. As to quaternary structure, hexamer; dimer of trimers. Requires Fe cation as cofactor.

The enzyme catalyses homogentisate + O2 = 4-maleylacetoacetate + H(+). It participates in amino-acid degradation; L-phenylalanine degradation; acetoacetate and fumarate from L-phenylalanine: step 4/6. Functionally, involved in the catabolism of homogentisate (2,5-dihydroxyphenylacetate or 2,5-OH-PhAc), a central intermediate in the degradation of phenylalanine and tyrosine. Catalyzes the oxidative ring cleavage of the aromatic ring of homogentisate to yield maleylacetoacetate. The polypeptide is Homogentisate 1,2-dioxygenase (Xanthomonas oryzae pv. oryzae (strain KACC10331 / KXO85)).